Here is a 342-residue protein sequence, read N- to C-terminus: CMP-N-acetylneuraminate-beta-galactosamide-alpha-2,3-sialyltransferase 1 (342 aa).

Over 1–10 (MVTVRKRNVK) the chain is Cytoplasmic. The chain crosses the membrane as a helical; Signal-anchor for type II membrane protein span at residues 11 to 28 (VFTFAFVLITVTSFLLNY). Topologically, residues 29–342 (KHQVTMTTWD…IEKIKFFKGR (314 aa)) are lumenal. 3 disulfides stabilise this stretch: Cys-61/Cys-66, Cys-63/Cys-141, and Cys-144/Cys-283. N-linked (GlcNAc...) asparagine glycosylation occurs at Asn-81. Gln-107 is a binding site for substrate. A glycan (N-linked (GlcNAc...) asparagine) is linked at Asn-116. Residues Asn-149 and Asn-172 each coordinate substrate. 2 N-linked (GlcNAc...) asparagine glycosylation sites follow: Asn-203 and Asn-229. Positions 232, 268, 272, 292, and 301 each coordinate substrate. An N-linked (GlcNAc...) asparagine glycan is attached at Asn-306. His-318 lines the substrate pocket. An N-linked (GlcNAc...) asparagine glycan is attached at Asn-325.

Belongs to the glycosyltransferase 29 family. Post-translationally, the soluble form derives from the membrane form by proteolytic processing.

Its subcellular location is the golgi apparatus. It is found in the golgi stack membrane. The protein resides in the secreted. It carries out the reaction a beta-D-galactosyl-(1-&gt;3)-N-acetyl-alpha-D-galactosaminyl derivative + CMP-N-acetyl-beta-neuraminate = an N-acetyl-alpha-neuraminyl-(2-&gt;3)-beta-D-galactosyl-(1-&gt;3)-N-acetyl-alpha-D-galactosaminyl derivative + CMP + H(+). Its pathway is protein modification; protein glycosylation. Responsible for the synthesis of the sequence NeuAc-alpha-2,3-Gal-beta-1,3-GalNAc- found on sugar chains O-linked to Thr or Ser and also as a terminal sequence on certain gangliosides. SIAT4A and SIAT4B sialylate the same acceptor substrates but exhibit different Km values. This Gallus gallus (Chicken) protein is CMP-N-acetylneuraminate-beta-galactosamide-alpha-2,3-sialyltransferase 1 (ST3GAL1).